Reading from the N-terminus, the 129-residue chain is Serum amyloid A protein (129 aa).

The N-terminal stretch at Met-1–Ser-18 is a signal peptide. Gln-19 carries the pyrrolidone carboxylic acid modification. The disordered stretch occupies residues Phe-88–Tyr-129. The propeptide at Arg-112–Tyr-129 is often cleaved during amyloidogenesis.

This sequence belongs to the SAA family. As to expression, expressed by the liver; secreted in plasma.

It localises to the secreted. Functionally, major acute phase reactant. Apolipoprotein of the HDL complex. The protein is Serum amyloid A protein (SAA1) of Felis catus (Cat).